The chain runs to 153 residues: UPF0756 membrane protein LCABL_15860 (153 aa).

4 helical membrane passes run 4–24, 52–72, 85–105, and 115–135; these read WLFLLGILAIAIVGKNKSLII, WGVTVISAAIMVPIATGEIGF, WIAIGCGVLVAVLSAKGVGLL, and LVFGTIIGVVFLKGIAAGPVI.

This sequence belongs to the UPF0756 family.

It localises to the cell membrane. The polypeptide is UPF0756 membrane protein LCABL_15860 (Lacticaseibacillus casei (strain BL23) (Lactobacillus casei)).